Here is a 552-residue protein sequence, read N- to C-terminus: MRSDTVKKGFEKAPQRSLFKAMGYTDEEIRRPLIAVVNSWNEVVPGHIHLDRIAEAVKAGIRLAGATPMEFNVIGVCDGIAMGHIGMKYSLITRELIADSIEAMVMAHQFDGMVLIPNCDKIVPGMLIAAARVNIPAILISGGPMLAGKIGDKVCDLNSVFEGVGAYSAGKISEEDLYALEENACPGCGSCSGMFTANTMNCLSEVLGLALPGNGTIPAVMAARIRLAKMAGMKIVELVEKDIKPSDILTVEAFENALAVDMALGGSTNTILHLPAIANEVGIKLNLDIINAISDRTPNLCKLSPAGQHHIEDLYFAGGVQAVMNELSKKGLLHLNLMTVTGKTVGENIKDANVKNYNVIRPIDNPYSETGGLVIVRGNLAPDGAVVKKSAVPPKLMKHRGPARVFESGEEVFEAILKGKIQKGDVIVIRYEGPKGGPGMREMLSPTSALAGVGLIEDVALITDGRFSGATRGACFGHVSPEAAERGPIAAVQDGDMISIDIENKTLTLEVPEEEIKRRLEILPPFEPKVKKGYLYRYSKLVRSASTGAILE.

Asp78 contributes to the Mg(2+) binding site. Cys119 is a binding site for [2Fe-2S] cluster. Mg(2+) is bound by residues Asp120 and Lys121. N6-carboxylysine is present on Lys121. A [2Fe-2S] cluster-binding site is contributed by Cys191. Residue Glu442 coordinates Mg(2+). Ser468 functions as the Proton acceptor in the catalytic mechanism.

Belongs to the IlvD/Edd family. In terms of assembly, homodimer. It depends on [2Fe-2S] cluster as a cofactor. Requires Mg(2+) as cofactor.

The catalysed reaction is (2R)-2,3-dihydroxy-3-methylbutanoate = 3-methyl-2-oxobutanoate + H2O. It catalyses the reaction (2R,3R)-2,3-dihydroxy-3-methylpentanoate = (S)-3-methyl-2-oxopentanoate + H2O. Its pathway is amino-acid biosynthesis; L-isoleucine biosynthesis; L-isoleucine from 2-oxobutanoate: step 3/4. It functions in the pathway amino-acid biosynthesis; L-valine biosynthesis; L-valine from pyruvate: step 3/4. In terms of biological role, functions in the biosynthesis of branched-chain amino acids. Catalyzes the dehydration of (2R,3R)-2,3-dihydroxy-3-methylpentanoate (2,3-dihydroxy-3-methylvalerate) into 2-oxo-3-methylpentanoate (2-oxo-3-methylvalerate) and of (2R)-2,3-dihydroxy-3-methylbutanoate (2,3-dihydroxyisovalerate) into 2-oxo-3-methylbutanoate (2-oxoisovalerate), the penultimate precursor to L-isoleucine and L-valine, respectively. The chain is Dihydroxy-acid dehydratase from Caldicellulosiruptor bescii (strain ATCC BAA-1888 / DSM 6725 / KCTC 15123 / Z-1320) (Anaerocellum thermophilum).